Here is a 50-residue protein sequence, read N- to C-terminus: Large ribosomal subunit protein bL33 (50 aa).

Belongs to the bacterial ribosomal protein bL33 family.

This Solibacter usitatus (strain Ellin6076) protein is Large ribosomal subunit protein bL33.